Here is a 122-residue protein sequence, read N- to C-terminus: Large ribosomal subunit protein uL18 (122 aa).

This sequence belongs to the universal ribosomal protein uL18 family. In terms of assembly, part of the 50S ribosomal subunit; part of the 5S rRNA/L5/L18/L25 subcomplex. Contacts the 5S and 23S rRNAs.

Its function is as follows. This is one of the proteins that bind and probably mediate the attachment of the 5S RNA into the large ribosomal subunit, where it forms part of the central protuberance. The sequence is that of Large ribosomal subunit protein uL18 from Ruminiclostridium cellulolyticum (strain ATCC 35319 / DSM 5812 / JCM 6584 / H10) (Clostridium cellulolyticum).